We begin with the raw amino-acid sequence, 294 residues long: Nucleotide-binding protein CLL_A3342 (294 aa).

Position 8–15 (Gly-8–Thr-15) interacts with ATP. Residue Asp-59 to Gly-62 participates in GTP binding.

The protein belongs to the RapZ-like family.

In terms of biological role, displays ATPase and GTPase activities. The protein is Nucleotide-binding protein CLL_A3342 of Clostridium botulinum (strain Eklund 17B / Type B).